The sequence spans 188 residues: Small ribosomal subunit protein uS7 (188 aa).

Belongs to the universal ribosomal protein uS7 family. As to quaternary structure, part of the 30S ribosomal subunit.

Functionally, one of the primary rRNA binding proteins, it binds directly to 16S rRNA where it nucleates assembly of the head domain of the 30S subunit. Is located at the subunit interface close to the decoding center. This is Small ribosomal subunit protein uS7 from Methanococcus maripaludis (strain C6 / ATCC BAA-1332).